The following is a 370-amino-acid chain: F-box/kelch-repeat protein At4g38940 (370 aa).

An F-box domain is found at Pro18 to Arg64. Kelch repeat units follow at residues Asn131–Arg177, Lys178–Gly230, and Ser263–Gly315.

In terms of assembly, part of a SCF (ASK-cullin-F-box) protein ligase complex. Interacts with SKP1A/ASK1, SKP1B/ASK2, ASK11, ASK13 and ASK18.

It localises to the nucleus. It functions in the pathway protein modification; protein ubiquitination. Its function is as follows. Component of SCF(ASK-cullin-F-box) E3 ubiquitin ligase complexes, which may mediate the ubiquitination and subsequent proteasomal degradation of target proteins. The polypeptide is F-box/kelch-repeat protein At4g38940 (Arabidopsis thaliana (Mouse-ear cress)).